A 169-amino-acid chain; its full sequence is Cell division inhibitor SulA (169 aa).

Positions 106–112 (ALRTGNY) are ftsZ binding. Residues 162 to 169 (KIHSNLYH) are lon protease binding.

The protein belongs to the SulA family. As to quaternary structure, interacts with FtsZ. In terms of processing, is rapidly cleaved and degraded by the Lon protease once DNA damage is repaired.

In terms of biological role, component of the SOS system and an inhibitor of cell division. Accumulation of SulA causes rapid cessation of cell division and the appearance of long, non-septate filaments. In the presence of GTP, binds a polymerization-competent form of FtsZ in a 1:1 ratio, thus inhibiting FtsZ polymerization and therefore preventing it from participating in the assembly of the Z ring. This mechanism prevents the premature segregation of damaged DNA to daughter cells during cell division. This is Cell division inhibitor SulA from Escherichia fergusonii (strain ATCC 35469 / DSM 13698 / CCUG 18766 / IAM 14443 / JCM 21226 / LMG 7866 / NBRC 102419 / NCTC 12128 / CDC 0568-73).